Consider the following 152-residue polypeptide: Interleukin-3 (152 aa).

Positions 1-19 (MSCLPVLLLLQLLVSPGLQ) are cleaved as a signal peptide. Residues N34 and N89 are each glycosylated (N-linked (GlcNAc...) asparagine). A disulfide bond links C35 and C103.

This sequence belongs to the IL-3 family. Monomer. In terms of tissue distribution, activated T-cells, mast cells, natural killer cells.

Its subcellular location is the secreted. Its function is as follows. Granulocyte/macrophage colony-stimulating factors are cytokines that act in hematopoiesis by controlling the production, differentiation, and function of 2 related white cell populations of the blood, the granulocytes and the monocytes-macrophages. This CSF induces granulocytes, macrophages, mast cells, stem cells, erythroid cells, eosinophils and megakaryocytes. This Hylobates lar (Lar gibbon) protein is Interleukin-3 (IL3).